The sequence spans 586 residues: MASKKEQWKSDLYGDAVRDELEAFAEEGFESIPEDERDKWFTRFKFWGVFQQRTGQESYFMMRLTNANGVLEPGQLRTIAEVARDYATGPVDNPEFGNGWVDLTTRQSIQLHWLELEDIPEIWEQLESVGVTSRSAGGDTMRNITGCPVAGKDTHELVESKPLLDRFQSELREDDALSNMPRKFNISVTGCREGCAQDSINDIGLEPARKEVDGEVITGFNVRVGGGLGSRKPRVARSLDVFVADEERAYEVVRGFVELYHDHGNRDVRARARSRFFVDDWGTEKIRDRLESEYLDFELQSAGEDIRDEYTYNAGRPQSAGKSDHVGVHEQSDGRYYVGLSVAVGRLTAADALELADLADKYGSGKIRLTRRQNPIVMDVPAGALDDLLAEPLLSKHTPEPNPFQRGTVACTGTEFCSLALTETKARTARMLRWLRDNVEVPDDVHQLKIHYSGCTADCGQANTADIGLFGMRAQKDGEMVEAMDIGVGGGIGDEPSFVEWIHQRVPADEVPGAIASLVEAFAAHRTAGQTFRQWVEAEGPDAVAEYCEPIETDFEAPYMHDAKQSWYPFADEDEPPKTEQPMTSD.

The [4Fe-4S] cluster site is built by Cys411, Cys417, Cys455, and Cys459. Cys459 is a siroheme binding site. The tract at residues 566-586 (SWYPFADEDEPPKTEQPMTSD) is disordered.

Belongs to the nitrite and sulfite reductase 4Fe-4S domain family. In terms of assembly, monomer. The cofactor is siroheme. [4Fe-4S] cluster is required as a cofactor.

The catalysed reaction is 6 oxidized [2Fe-2S]-[ferredoxin] + NH4(+) + 2 H2O = nitrite + 6 reduced [2Fe-2S]-[ferredoxin] + 8 H(+). It functions in the pathway nitrogen metabolism; nitrate reduction (assimilation). Its activity is regulated as follows. Inhibited by cyanide and azide. Its function is as follows. Catalyzes the reduction of nitrite to ammonium in the nitrate assimilation pathway, using ferredoxin as the electron donor. Can use reduced methyl viologen but neither NADPH nor NADH as electron donors. The sequence is that of Assimilatory ferredoxin-dependent nitrite reductase from Haloferax mediterranei (strain ATCC 33500 / DSM 1411 / JCM 8866 / NBRC 14739 / NCIMB 2177 / R-4) (Halobacterium mediterranei).